The primary structure comprises 664 residues: uncharacterized protein (664 aa).

An N-terminal signal peptide occupies residues 1-25; that stretch reads MSWKRYLKWVSFAIIPLLFANTSIK. Residues 625-645 form a helical membrane-spanning segment; the sequence is IIVYLIIGFSVLVLFITVFIY.

The protein belongs to the MG414/MG415 family.

It is found in the cell membrane. This is an uncharacterized protein from Mycoplasma genitalium (strain ATCC 33530 / DSM 19775 / NCTC 10195 / G37) (Mycoplasmoides genitalium).